Reading from the N-terminus, the 567-residue chain is Delta(24)-sterol reductase (567 aa).

Residues 1–24 (MSDLEAPLRPKRKKIWVDYFVKFR) lie on the Lumenal side of the membrane. Residues 25-45 (WILVIFVVLPISFTLYFLTYL) form a helical; Signal-anchor membrane-spanning segment. Residues 45–231 (LGDVRSEWKS…VAAEVKLIPI (187 aa)) enclose the FAD-binding PCMH-type domain. The Cytoplasmic segment spans residues 46 to 567 (GDVRSEWKSF…AYPEVDQPPD (522 aa)). The interaction with calmodulin stretch occupies residues 520–541 (CRRKYGAVGTFMSVYYKCKKGR). The interval 548–567 (REAEQAHLDTAYPEVDQPPD) is disordered.

The protein belongs to the DIMINUTO family. In terms of tissue distribution, highly expressed in the apical region and root tips and lower levels in immature and mature internodes and leaves.

It is found in the membrane. It catalyses the reaction lathosterol + NADP(+) = 5alpha-cholesta-7,24-dien-3beta-ol + NADPH + H(+). Functionally, plays a critical role in the general process of plant cell elongation. This Pisum sativum (Garden pea) protein is Delta(24)-sterol reductase (DIM).